Consider the following 183-residue polypeptide: Dual-action ribosomal maturation protein DarP (183 aa).

It belongs to the DarP family.

The protein localises to the cytoplasm. Functionally, member of a network of 50S ribosomal subunit biogenesis factors which assembles along the 30S-50S interface, preventing incorrect 23S rRNA structures from forming. Promotes peptidyl transferase center (PTC) maturation. This Klebsiella pneumoniae (strain 342) protein is Dual-action ribosomal maturation protein DarP.